Here is a 183-residue protein sequence, read N- to C-terminus: Inner membrane protein p54 (183 aa).

A helical membrane pass occupies residues 32–52; the sequence is YTILIAIVVLVIIIIVLIYLF. The segment at 81-157 is disordered; the sequence is EVTPQPGTSK…PYTTVTTQNT (77 aa). A compositionally biased stretch (polar residues) spans 111-122; that stretch reads RPATNKPVTDNP. Positions 130–143 are enriched in low complexity; the sequence is ATGGPAAAPAAASA. Residues 149-161 form an interaction with host DYNLL1 region; sequence YTTVTTQNTASQT.

Belongs to the asfivirus envelope protein p54 family. Interacts with the host light chain cytoplasmic dynein DYNLL1; this interaction is critical for intracellular microtubule-dependent virus transport toward viral factories.

Its subcellular location is the virion membrane. The protein localises to the host cytoplasm. It is found in the host cytoskeleton. It localises to the host endoplasmic reticulum membrane. Its function is as follows. Inner envelope protein involved, through its interaction with host dynein, in the intracellular microtubule-dependent transport of viral capsid toward viral factories. Seems to induce caspase-3 activation and apoptosis. Plays a role in virion morphogenesis by recruiting and transforming the host ER membranes into the precursors of the viral envelope. Involved in virus attachment to the host cell. The protein is Inner membrane protein p54 of African swine fever virus (strain Badajoz 1971 Vero-adapted) (Ba71V).